The following is a 215-amino-acid chain: MEAAFWHQKWADNQIGFHQAQANPYLQRYWPGLGLAAGSRVLVPLCGKSLDMAWLAGQGYRVRGIELSRRAVEDFFQEQGLQAQVWQQGAFEVWCSGEVELWCGDFFALRAEDVADCVGLYDRAALIALPPQMRERYMGLLSQILPVGSGLLVTLDYEQKLLAGPPFSVADEEVRRGFAGWQVEEVEARDVIGESPKFLQAGVKRLVERVYRVQF.

S-adenosyl-L-methionine-binding residues include Trp10, Leu45, Glu66, and Arg123.

Belongs to the class I-like SAM-binding methyltransferase superfamily. TPMT family.

The protein resides in the cytoplasm. It carries out the reaction S-adenosyl-L-methionine + a thiopurine = S-adenosyl-L-homocysteine + a thiopurine S-methylether.. In Pseudomonas putida (strain W619), this protein is Thiopurine S-methyltransferase.